We begin with the raw amino-acid sequence, 81 residues long: MFPLVEFCISNMAKGSDVVFEKLENDPNIDVLEYGCLQNCGLCASSLYALVDGDIVEGNTPDDLLKNIYQHIEDNDITNLL.

The protein belongs to the UPF0349 family.

The sequence is that of UPF0349 protein SE_0633 from Staphylococcus epidermidis (strain ATCC 12228 / FDA PCI 1200).